Reading from the N-terminus, the 885-residue chain is 3-hydroxy-3-methylglutaryl-coenzyme A reductase (885 aa).

The Cytoplasmic segment spans residues 1–9; it reads MLSRLFRMH. A helical membrane pass occupies residues 10–39; the sequence is GLFVASHPWEVIVGTVTLTICMMSMNMFTG. The Lumenal portion of the chain corresponds to 40 to 56; the sequence is NDKICGWNYECPKFEED. Residues 57-78 traverse the membrane as a helical segment; that stretch reads VLSSDIIILTITRCIAILYIYF. An SSD domain is found at 61-218; that stretch reads DIIILTITRC…MTFFPACVSL (158 aa). The short motif at 75–78 is the INSIG-binding motif element; sequence YIYF. Residues 79–89 lie on the Cytoplasmic side of the membrane; that stretch reads QFQNLRQLGSK. Lys89 is covalently cross-linked (Glycyl lysine isopeptide (Lys-Gly) (interchain with G-Cter in ubiquitin)). A helical membrane pass occupies residues 90–114; sequence YILGIAGLFTIFSSFVFSTVVIHFL. The Lumenal segment spans residues 115–123; it reads DKELTGLNE. The helical transmembrane segment at 124 to 149 threads the bilayer; it reads ALPFFLLLIDLSRASALAKFALSSNS. The Cytoplasmic segment spans residues 150-159; sequence QDEVRENIAR. A helical transmembrane segment spans residues 160 to 187; it reads GMAILGPTFTLDALVECLVIGVGTMSGV. Residues 188-191 lie on the Lumenal side of the membrane; it reads RQLE. A helical membrane pass occupies residues 192-220; the sequence is IMCCFGCMSVLATYFVFMTFFPACVSLVL. The Cytoplasmic portion of the chain corresponds to 221–248; it reads ELSRESREGRPIWQLSHFARVLEGEENK. A Glycyl lysine isopeptide (Lys-Gly) (interchain with G-Cter in ubiquitin) cross-link involves residue Lys248. The helical transmembrane segment at 249 to 275 threads the bilayer; sequence PNPVTQRVKIIMSLGLVLVHAHSRWIA. The Lumenal segment spans residues 276 to 314; sequence DPSPQNSTADNSKVSLGLDENVSKRIEPSVSLWQFYLSK. Residues Asn281 and Asn296 are each glycosylated (N-linked (GlcNAc...) asparagine). The chain crosses the membrane as a helical span at residues 315 to 339; the sequence is MISMDIEQVITLTLALLLAVKYIFF. Over 340-885 the chain is Cytoplasmic; sequence EQAETESTLS…LQGTCTKKAA (546 aa). Catalysis depends on charge relay system residues Glu558, Lys688, and Asp764. Catalysis depends on His863, which acts as the Proton donor. Ser869 is subject to Phosphoserine; by AMPK.

Belongs to the HMG-CoA reductase family. In terms of assembly, homotetramer. Homodimer. Interacts (via its SSD) with INSIG1; the interaction, accelerated by sterols, leads to the recruitment of HMGCR to AMFR/gp78 for its ubiquitination by the sterol-mediated ERAD pathway. Interacts with UBIAD1. In terms of processing, undergoes sterol-mediated ubiquitination and ER-associated degradation (ERAD). Accumulation of sterols in the endoplasmic reticulum (ER) membrane, triggers binding of the reductase to the ER membrane protein INSIG1 or INSIG2. The INSIG1 binding leads to the recruitment of the ubiquitin ligase, AMFR/gp78, RNF139 or RNF145, initiating ubiquitination of the reductase. The ubiquitinated reductase is then extracted from the ER membrane and delivered to cytosolic 26S proteosomes by a mechanism probably mediated by the ATPase Valosin-containing protein VCP/p97. The INSIG2-binding leads to the recruitment of the ubiquitin ligase RNF139, initiating ubiquitination of the reductase. Lys-248 is the main site of ubiquitination. Ubiquitination is enhanced by the presence of a geranylgeranylated protein. Post-translationally, N-glycosylated. Deglycosylated by NGLY1 on release from the endoplasmic reticulum (ER) in a sterol-mediated manner. Phosphorylated. Phosphorylation at Ser-869 reduces the catalytic activity. High expression found in liver, heart, kidney, bladder and subcutaneous fat. Lower levels in lung, uterus and large intestine. Lowest levels in cerebrum, spleen, spinal cord, stomach, ovary, longissimus muscle, and small intestine.

It localises to the endoplasmic reticulum membrane. The protein resides in the peroxisome membrane. The enzyme catalyses (R)-mevalonate + 2 NADP(+) + CoA = (3S)-3-hydroxy-3-methylglutaryl-CoA + 2 NADPH + 2 H(+). It participates in metabolic intermediate biosynthesis; (R)-mevalonate biosynthesis; (R)-mevalonate from acetyl-CoA: step 3/3. Regulated by a negative feedback mechanism through sterols and non-sterol metabolites derived from mevalonate. Phosphorylation at Ser-869 down-regulates the catalytic activity. Functionally, catalyzes the conversion of (3S)-hydroxy-3-methylglutaryl-CoA (HMG-CoA) to mevalonic acid, the rate-limiting step in the synthesis of cholesterol and other isoprenoids, thus plays a critical role in cellular cholesterol homeostasis. This Sus scrofa (Pig) protein is 3-hydroxy-3-methylglutaryl-coenzyme A reductase (HMGCR).